A 165-amino-acid polypeptide reads, in one-letter code: Nucleotide-binding protein Suden_0039 (165 aa).

This sequence belongs to the YajQ family.

Functionally, nucleotide-binding protein. The protein is Nucleotide-binding protein Suden_0039 of Sulfurimonas denitrificans (strain ATCC 33889 / DSM 1251) (Thiomicrospira denitrificans (strain ATCC 33889 / DSM 1251)).